The primary structure comprises 275 residues: Bis(5'-nucleosyl)-tetraphosphatase, symmetrical (275 aa).

This sequence belongs to the Ap4A hydrolase family.

It carries out the reaction P(1),P(4)-bis(5'-adenosyl) tetraphosphate + H2O = 2 ADP + 2 H(+). Functionally, hydrolyzes diadenosine 5',5'''-P1,P4-tetraphosphate to yield ADP. The protein is Bis(5'-nucleosyl)-tetraphosphatase, symmetrical of Nitrosospira multiformis (strain ATCC 25196 / NCIMB 11849 / C 71).